The chain runs to 218 residues: Alkylmercury lyase (218 aa).

Belongs to the MerB family.

The enzyme catalyses an alkylmercury + H(+) = an alkane + Hg(2+). Its function is as follows. Cleaves the carbon-mercury bond of organomercurials such as phenylmercuric acetate. One product is Hg(2+), which is subsequently detoxified by the mercuric reductase. The chain is Alkylmercury lyase (merB1) from Bacillus cereus.